Here is a 416-residue protein sequence, read N- to C-terminus: Choline/ethanolaminephosphotransferase 1 (416 aa).

The interval 1-20 (MSGHRSTRKRCGDSHPESPV) is disordered. Position 18 is a phosphoserine (Ser-18). Phosphothreonine is present on Thr-40. Asn-86 provides a ligand contact to CDP-choline. The next 2 membrane-spanning stretches (helical) occupy residues 89 to 108 (TIIG…FYCP) and 116 to 133 (LWAY…QSLD). Asp-133 lines the Mg(2+) pocket. N-linked (GlcNAc...) asparagine glycosylation occurs at Asn-144. Glu-151 serves as a coordination point for CDP-choline. Asp-154 provides a ligand contact to Mg(2+). His-155 functions as the Proton acceptor in the catalytic mechanism. 8 consecutive transmembrane segments (helical) span residues 156-176 (GCDS…VQLG), 180-199 (DWMF…AHWQ), 210-230 (IIDV…AVIG), 246-267 (MKIF…NYFR), 286-306 (VLSP…IYKK), 315-334 (HPCL…TNKL), 349-363 (TAFI…DQYF), and 368-388 (DEYI…IRYC). Asp-158 is a Mg(2+) binding site.

The protein belongs to the CDP-alcohol phosphatidyltransferase class-I family. Homodimer. Mg(2+) serves as cofactor. The cofactor is Mn(2+). Ubiquitously expressed.

It localises to the endoplasmic reticulum membrane. Its subcellular location is the nucleus membrane. It catalyses the reaction CDP-ethanolamine + a 1,2-diacyl-sn-glycerol = a 1,2-diacyl-sn-glycero-3-phosphoethanolamine + CMP + H(+). The enzyme catalyses CDP-choline + a 1,2-diacyl-sn-glycerol = a 1,2-diacyl-sn-glycero-3-phosphocholine + CMP + H(+). The catalysed reaction is 1-O-alkyl-2-acyl-sn-glycerol + CDP-choline = a 1-O-alkyl-2-acyl-sn-glycero-3-phosphocholine + CMP + H(+). It carries out the reaction a 1-O-(1Z-alkenyl)-2-acyl-sn-glycerol + CDP-choline = a 1-O-(1Z-alkenyl)-2-acyl-sn-glycero-3-phosphocholine + CMP + H(+). It catalyses the reaction 1,2-dioctanoyl-sn-glycerol + CDP-choline = 1,2-dioctanoyl-sn-glycero-3-phosphocholine + CMP + H(+). The enzyme catalyses 1,2-didecanoyl-sn-glycerol + CDP-choline = 1,2-didecanoyl-sn-glycero-3-phosphocholine + CMP + H(+). The catalysed reaction is CDP-choline + 1,2-di-(9Z-octadecenoyl)-sn-glycerol = 1,2-di-(9Z-octadecenoyl)-sn-glycero-3-phosphocholine + CMP + H(+). It carries out the reaction 1-hexadecanoyl-2-(9Z-octadecenoyl)-sn-glycerol + CDP-choline = 1-hexadecanoyl-2-(9Z-octadecenoyl)-sn-glycero-3-phosphocholine + CMP + H(+). It catalyses the reaction CDP-ethanolamine + 1,2-di-(9Z-octadecenoyl)-sn-glycerol = 1,2-di-(9Z-octadecenoyl)-sn-glycero-3-phosphoethanolamine + CMP + H(+). The enzyme catalyses 1-hexadecanoyl-2-(9Z-octadecenoyl)-sn-glycerol + CDP-ethanolamine = 1-hexadecanoyl-2-(9Z-octadecenoyl)-sn-glycero-3-phosphoethanolamine + CMP + H(+). The catalysed reaction is 1-hexadecanoyl-2-(4Z,7Z,10Z,13Z,16Z,19Z-docosahexaenoyl)-sn-glycerol + CDP-choline = 1-hexadecanoyl-2-(4Z,7Z,10Z,13Z,16Z,19Z-docosahexaenoyl)-sn-glycero-3-phosphocholine + CMP + H(+). It carries out the reaction 1,2-di-(9Z-hexadecenoyl)-sn-glycerol + CDP-choline = 1,2-di-(9Z-hexadecenoyl)-sn-glycero-3-phosphocholine + CMP + H(+). It catalyses the reaction 1,2-di-(9Z-hexadecenoyl)-sn-glycerol + CDP-ethanolamine = 1,2-di-(9Z-hexadecenoyl)-sn-glycero-3-phosphoethanolamine + CMP + H(+). The enzyme catalyses 1-O-hexadecyl-2-acetyl-sn-glycerol + CDP-choline = 1-O-hexadecyl-2-acetyl-sn-glycero-3-phosphocholine + CMP + H(+). The catalysed reaction is 1-O-hexadecyl-2-(5Z,8Z,11Z,14Z-eicosatetraenoyl)-sn-glycerol + CDP-choline = 1-O-hexadecyl-2-(5Z,8Z,11Z,14Z)-eicosatetraenoyl-sn-glycero-3-phosphocholine + CMP + H(+). The protein operates within phospholipid metabolism; phosphatidylethanolamine biosynthesis; phosphatidylethanolamine from ethanolamine: step 3/3. It functions in the pathway phospholipid metabolism; phosphatidylcholine biosynthesis; phosphatidylcholine from phosphocholine: step 2/2. Catalyzes both phosphatidylcholine and phosphatidylethanolamine biosynthesis from CDP-choline and CDP-ethanolamine, respectively. Involved in protein-dependent process of phospholipid transport to distribute phosphatidyl choline to the lumenal surface. Has a higher cholinephosphotransferase activity than ethanolaminephosphotransferase activity. This chain is Choline/ethanolaminephosphotransferase 1, found in Homo sapiens (Human).